The chain runs to 150 residues: Large ribosomal subunit protein bL9 (150 aa).

This sequence belongs to the bacterial ribosomal protein bL9 family.

Functionally, binds to the 23S rRNA. This is Large ribosomal subunit protein bL9 from Leuconostoc citreum (strain KM20).